The chain runs to 622 residues: Polypeptide N-acetylgalactosaminyltransferase 6 (622 aa).

The Cytoplasmic segment spans residues Met-1–His-8. The helical; Signal-anchor for type II membrane protein transmembrane segment at Met-9–His-28 threads the bilayer. The Lumenal portion of the chain corresponds to Arg-29–Val-622. Residue Asn-86 is glycosylated (N-linked (GlcNAc...) asparagine). 2 disulfide bridges follow: Cys-165/Cys-402 and Cys-393/Cys-474. The interval Leu-176–Arg-285 is catalytic subdomain A. Mn(2+) contacts are provided by Asp-269, His-271, and His-407. Residues Pro-348–Arg-410 are catalytic subdomain B. Asn-476 is a glycosylation site (N-linked (GlcNAc...) asparagine). In terms of domain architecture, Ricin B-type lectin spans Thr-506–Val-622. An intrachain disulfide couples Cys-509 to Cys-527. The UDP-N-acetyl-alpha-D-galactosamine site is built by Asp-511, Glu-514, His-528, and Asn-533. 2 disulfide bridges follow: Cys-553–Cys-566 and Cys-597–Cys-610.

The protein belongs to the glycosyltransferase 2 family. GalNAc-T subfamily. Requires Mn(2+) as cofactor. As to expression, expressed in placenta and trachea. Weakly expressed in brain and pancreas. Expressed in fibroblast. Weakly or not expressed in lung, liver, muscle, kidney, spleen, thymus, prostate, testis, ovary, intestine, colon, leukocyte, stomach, thyroid, spinal cord, lymph node, trachea, adrenal gland and bone marrow.

The protein resides in the golgi apparatus membrane. It carries out the reaction L-seryl-[protein] + UDP-N-acetyl-alpha-D-galactosamine = a 3-O-[N-acetyl-alpha-D-galactosaminyl]-L-seryl-[protein] + UDP + H(+). The catalysed reaction is L-threonyl-[protein] + UDP-N-acetyl-alpha-D-galactosamine = a 3-O-[N-acetyl-alpha-D-galactosaminyl]-L-threonyl-[protein] + UDP + H(+). It participates in protein modification; protein glycosylation. Functionally, catalyzes the initial reaction in O-linked oligosaccharide biosynthesis, the transfer of an N-acetyl-D-galactosamine residue to a serine or threonine residue on the protein receptor. May participate in synthesis of oncofetal fibronectin. Has activity toward MUC1A, MUC2, EA2 and fibronectin peptides. Glycosylates FGF23. The sequence is that of Polypeptide N-acetylgalactosaminyltransferase 6 (GALNT6) from Homo sapiens (Human).